Here is a 455-residue protein sequence, read N- to C-terminus: Bifunctional protein GlmU (455 aa).

Positions 1–227 are pyrophosphorylase; that stretch reads MGLSVIILAA…CEEVQGVNDR (227 aa). UDP-N-acetyl-alpha-D-glucosamine is bound by residues 8 to 11, Lys22, Gln73, 78 to 79, 100 to 102, Gly137, Glu152, Asn167, and Asn225; these read LAAG, GT, and YGD. Residue Asp102 participates in Mg(2+) binding. Asn225 contributes to the Mg(2+) binding site. A linker region spans residues 228-248; it reads WELTKLERYYQRLMAKKLSLA. The interval 249 to 455 is N-acetyltransferase; the sequence is GVTIIDPERF…KGWHRPTKKE (207 aa). The UDP-N-acetyl-alpha-D-glucosamine site is built by Arg332 and Lys350. Residue His362 is the Proton acceptor of the active site. The UDP-N-acetyl-alpha-D-glucosamine site is built by Tyr365 and Asn376. Acetyl-CoA is bound by residues Ala379, 385–386, Ser404, Ala422, and Arg439; that span reads NY.

It in the N-terminal section; belongs to the N-acetylglucosamine-1-phosphate uridyltransferase family. The protein in the C-terminal section; belongs to the transferase hexapeptide repeat family. In terms of assembly, homotrimer. Requires Mg(2+) as cofactor.

The protein resides in the cytoplasm. It catalyses the reaction alpha-D-glucosamine 1-phosphate + acetyl-CoA = N-acetyl-alpha-D-glucosamine 1-phosphate + CoA + H(+). The enzyme catalyses N-acetyl-alpha-D-glucosamine 1-phosphate + UTP + H(+) = UDP-N-acetyl-alpha-D-glucosamine + diphosphate. The protein operates within nucleotide-sugar biosynthesis; UDP-N-acetyl-alpha-D-glucosamine biosynthesis; N-acetyl-alpha-D-glucosamine 1-phosphate from alpha-D-glucosamine 6-phosphate (route II): step 2/2. It functions in the pathway nucleotide-sugar biosynthesis; UDP-N-acetyl-alpha-D-glucosamine biosynthesis; UDP-N-acetyl-alpha-D-glucosamine from N-acetyl-alpha-D-glucosamine 1-phosphate: step 1/1. It participates in bacterial outer membrane biogenesis; LPS lipid A biosynthesis. Catalyzes the last two sequential reactions in the de novo biosynthetic pathway for UDP-N-acetylglucosamine (UDP-GlcNAc). The C-terminal domain catalyzes the transfer of acetyl group from acetyl coenzyme A to glucosamine-1-phosphate (GlcN-1-P) to produce N-acetylglucosamine-1-phosphate (GlcNAc-1-P), which is converted into UDP-GlcNAc by the transfer of uridine 5-monophosphate (from uridine 5-triphosphate), a reaction catalyzed by the N-terminal domain. In Coxiella burnetii (strain CbuK_Q154) (Coxiella burnetii (strain Q154)), this protein is Bifunctional protein GlmU.